A 242-amino-acid chain; its full sequence is Carbendazim hydrolyzing esterase (242 aa).

Catalysis depends on Ser77, which acts as the Acyl-ester intermediate.

The protein belongs to the AB hydrolase superfamily.

Its subcellular location is the secreted. It carries out the reaction carbendazim + H2O = 2-aminobenzimidazole + methanol + CO2. The catalysed reaction is carbendazim + H2O = N-(1H-1,3-benzodiazol-2-yl)carbamate + methanol + H(+). It catalyses the reaction N-(1H-1,3-benzodiazol-2-yl)carbamate + H(+) = 2-aminobenzimidazole + CO2. Catalyzes the hydrolysis of the fungicide carbendazim (methyl-1H-benzimidazol-2-ylcarbamate or MBC) to 2-aminobenzimidazole (2-AB). Following hydrolysis of the carbamate ester, the carbamate decarboxylates spontaneously. Can hydrolyze model carboxylesters such as methyl salicylate, alpha-naphthyl acetate and p-nitrophenyl acetate. In addition, shows substantial hydrolytic activity in vitro against widespread pollutants with carboxylester, carbamate and amide linkages, such as dimethyl phthalate, propanil and chlorpropham. The sequence is that of Carbendazim hydrolyzing esterase from Nocardioides sp. (strain SG-4G).